The sequence spans 398 residues: Fe-regulated protein 8 (398 aa).

Functionally, protein of unknown function; part of the gene cluster that mediates the biosynthesis of siderophore ferrichrome A which is contributing to organismal virulence. In Mycosarcoma maydis (Corn smut fungus), this protein is Fe-regulated protein 8.